A 112-amino-acid chain; its full sequence is Signal recognition particle 19 kDa protein (112 aa).

This sequence belongs to the SRP19 family. As to quaternary structure, part of the signal recognition particle protein translocation system, which is composed of SRP and FtsY. Archaeal SRP consists of a 7S RNA molecule of 300 nucleotides and two protein subunits: SRP54 and SRP19.

Its subcellular location is the cytoplasm. Its function is as follows. Involved in targeting and insertion of nascent membrane proteins into the cytoplasmic membrane. Binds directly to 7S RNA and mediates binding of the 54 kDa subunit of the SRP. This is Signal recognition particle 19 kDa protein from Aeropyrum pernix (strain ATCC 700893 / DSM 11879 / JCM 9820 / NBRC 100138 / K1).